We begin with the raw amino-acid sequence, 848 residues long: MYLYIETLKQRLDAINQLRVDRALAAMGPAFQQVYSLLPTLLHYHHPLMPGYLDGNVPKGICLYTPDETQRHYLNELELYRGMSVQDPPKGELPITGVYTMGSTSSVGQSCSSDLDIWVCHQSWLDSEERQLLQRKCSLLESWAASLGVEVSFFLIDENRFRHNESGSLGGEDCGSTQHILLLDEFYRTAVRLAGKRILWNMVPCDEEEHYDDYVMTLYAQGVLTPNEWLDLGGLSSLSAEEYFGASLWQLYKSIDSPYKAVLKTLLLEAYSWEYPNPRLLAKDIKQRLHDGEIVSFGLDPYCMMLERVTEYLTAIEDFTRLDLVRRCFYLKVCEKLSRERACVGWRREVLSQLVKEWEWDDARLAMLDNRANWKIDQVREAHNELLDAMMQSYRNLIRFARRNNLSVSASPQDIGVLTRKLYAAFEALPGKVTLVNPQISPDLSEPNLTFIYVPPGRANRSGWYLYNRAPNIESIISHQPLEYNRYLNKLVAWAWFNGLLTSRTRLYIKGNGVVDLPKLQEMVADVSHHFPLRLPAPTPKALYSPCEIRHLAIIVNLEYDPTAAFRNQVVHFDFRKLDVFSFGENQNCLVGSVDLLYRNSWNEVRTLHFNGEQSMIEALKTILGKMHQDAAPPDSVEVFCYSQHLRGLIRTRVQQLVSECIELRLSSTRQETGRFKALRVSGQTWGLFFERLNVSVQKLENAIEFYGAISHNKLHGLSVQVETNHVKLPAVVDGFASEGIIQFFFEETQDENGFNIYILDESNRVEVYHHCEGSKEELVRDVSRFYSSSHDRFTYGSSFINFNLPQFYQIVKVDGREQVIPFRTKSIGNMPPANQEHDAPLLQQYFS.

A catalytic region spans residues 1–535 (MYLYIETLKQ…DVSHHFPLRL (535 aa)). The interval 541–848 (KALYSPCEIR…DAPLLQQYFS (308 aa)) is regulatory. A Phosphohistidine; by CRR modification is found at histidine 609.

Belongs to the adenylyl cyclase class-1 family.

It is found in the cytoplasm. It catalyses the reaction ATP = 3',5'-cyclic AMP + diphosphate. In Escherichia coli O6:H1 (strain CFT073 / ATCC 700928 / UPEC), this protein is Adenylate cyclase (cyaA).